We begin with the raw amino-acid sequence, 454 residues long: uncharacterized protein (454 aa).

4 residues coordinate [4Fe-4S] cluster: C73, C79, C82, and C154. The S-adenosyl-L-methionine site is built by Q279, F307, D328, and D381. C408 acts as the Nucleophile in catalysis.

Belongs to the class I-like SAM-binding methyltransferase superfamily. RNA M5U methyltransferase family.

This is an uncharacterized protein from Leptospira interrogans serogroup Icterohaemorrhagiae serovar copenhageni (strain Fiocruz L1-130).